The chain runs to 390 residues: Protein phosphatase 1B (390 aa).

The span at 1-14 shows a compositional bias: basic and acidic residues; the sequence is MGAFLDKPKTEKHN. The disordered stretch occupies residues 1-20; sequence MGAFLDKPKTEKHNAHGAGN. A lipid anchor (N-myristoyl glycine) is attached at Gly2. Lys12 participates in a covalent cross-link: Glycyl lysine isopeptide (Lys-Gly) (interchain with G-Cter in ISG15). Positions 23–295 constitute a PPM-type phosphatase domain; sequence RYGLSSMQGW…DNMSVVLVCF (273 aa). Mn(2+) is bound by residues Asp60, Gly61, Asp243, and Asp286. A disordered region spans residues 371–390; sequence NPHKDNDGGAGDLEDSLVAL. Ser386 carries the post-translational modification Phosphoserine.

The protein belongs to the PP2C family. In terms of assembly, monomer. Interacts with PAK6. Interacts with the phosphorylated form of IKBKB/IKKB. Requires Mg(2+) as cofactor. Mn(2+) serves as cofactor. In terms of processing, isgylation negatively regulates its activity. Post-translationally, N-myristoylation is essential for the recognition of its substrates for dephosphorylation. Isoform 1: Expressed ubiquitously. Isoform 2: Expressed exclusively in testis and intestine. Isoform 3: Expressed exclusively in brain and intestine. Isoform 4: Expressed exclusively in testis and intestine.

The protein resides in the cytoplasm. It is found in the cytosol. The protein localises to the membrane. It carries out the reaction O-phospho-L-seryl-[protein] + H2O = L-seryl-[protein] + phosphate. It catalyses the reaction O-phospho-L-threonyl-[protein] + H2O = L-threonyl-[protein] + phosphate. In terms of biological role, enzyme with a broad specificity. Dephosphorylates PRKAA1 and PRKAA2. Inhibits TBK1-mediated antiviral signaling by dephosphorylating it at 'Ser-172'. Plays an important role in the termination of TNF-alpha-mediated NF-kappa-B activation through dephosphorylating and inactivating IKBKB/IKKB. This Mus musculus (Mouse) protein is Protein phosphatase 1B (Ppm1b).